The sequence spans 356 residues: HTH-type transcriptional regulator AglR (356 aa).

The HTH lacI-type domain occupies 1–57 (MPVNLKQLAELLGLSQTTVSRALNGYPEVNAETRARVLEAVRETGYRPNRAAQRLAT). The segment at residues 5–24 (LKQLAELLGLSQTTVSRALN) is a DNA-binding region (H-T-H motif). The interval 337–356 (TGPAPDRSPLPNPSPQVGGA) is disordered.

Probable regulatory protein for the binding-protein-dependent transport system for alpha-glucosides such as sucrose, maltose and trehalose. The chain is HTH-type transcriptional regulator AglR (aglR) from Rhizobium meliloti (strain 1021) (Ensifer meliloti).